Here is a 255-residue protein sequence, read N- to C-terminus: NAD-dependent protein deacylase (255 aa).

The region spanning 1-253 is the Deacetylase sirtuin-type domain; the sequence is MIEEAPRIIA…VKVKRCLENK (253 aa). Residue 20–39 participates in NAD(+) binding; sequence GAGVSAESGIPTFRDRGGLW. Tyrosine 64 and arginine 67 together coordinate substrate. NAD(+) is bound at residue 98-101; it reads QNID. Histidine 116 serves as the catalytic Proton acceptor. Residues cysteine 124, cysteine 127, cysteine 151, and cysteine 154 each coordinate Zn(2+). NAD(+) contacts are provided by residues 191-193, 217-219, and alanine 235; these read GTS and NTK.

The protein belongs to the sirtuin family. Class III subfamily. Zn(2+) serves as cofactor.

It is found in the cytoplasm. It carries out the reaction N(6)-acetyl-L-lysyl-[protein] + NAD(+) + H2O = 2''-O-acetyl-ADP-D-ribose + nicotinamide + L-lysyl-[protein]. The enzyme catalyses N(6)-succinyl-L-lysyl-[protein] + NAD(+) + H2O = 2''-O-succinyl-ADP-D-ribose + nicotinamide + L-lysyl-[protein]. Functionally, NAD-dependent lysine deacetylase and desuccinylase that specifically removes acetyl and succinyl groups on target proteins. Modulates the activities of several proteins which are inactive in their acylated form. Deacetylates the N-terminal lysine residue of Alba, the major archaeal chromatin protein and that, in turn, increases Alba's DNA binding affinity, thereby repressing transcription. The chain is NAD-dependent protein deacylase from Thermococcus sibiricus (strain DSM 12597 / MM 739).